Reading from the N-terminus, the 291-residue chain is Acetyl-coenzyme A carboxylase carboxyl transferase subunit beta (291 aa).

Residues 29-291 form the CoA carboxyltransferase N-terminal domain; it reads IMTKCPQCKK…TGGEREWLEN (263 aa). Cys-33, Cys-36, Cys-52, and Cys-55 together coordinate Zn(2+). The C4-type zinc finger occupies 33–55; the sequence is CPQCKKIMLTKELDKNLRVCMNC.

The protein belongs to the AccD/PCCB family. As to quaternary structure, acetyl-CoA carboxylase is a heterohexamer composed of biotin carboxyl carrier protein (AccB), biotin carboxylase (AccC) and two subunits each of ACCase subunit alpha (AccA) and ACCase subunit beta (AccD). Requires Zn(2+) as cofactor.

It localises to the cytoplasm. The catalysed reaction is N(6)-carboxybiotinyl-L-lysyl-[protein] + acetyl-CoA = N(6)-biotinyl-L-lysyl-[protein] + malonyl-CoA. Its pathway is lipid metabolism; malonyl-CoA biosynthesis; malonyl-CoA from acetyl-CoA: step 1/1. Its function is as follows. Component of the acetyl coenzyme A carboxylase (ACC) complex. Biotin carboxylase (BC) catalyzes the carboxylation of biotin on its carrier protein (BCCP) and then the CO(2) group is transferred by the transcarboxylase to acetyl-CoA to form malonyl-CoA. This Bacillus pumilus (strain SAFR-032) protein is Acetyl-coenzyme A carboxylase carboxyl transferase subunit beta.